The primary structure comprises 81 residues: Cytochrome c oxidase subunit 7B2, mitochondrial (81 aa).

The transit peptide at 1-25 (MMFPLARNALSSLKIRSILQSMARQ) directs the protein to the mitochondrion. The Mitochondrial matrix portion of the chain corresponds to 26–33 (SHVKHSPD). The helical transmembrane segment at 34 to 60 (FHDKYGNAVLASGTAFCVVAWVFTATQ) threads the bilayer. Residues 61-81 (IGIEWNLSPVGRVTPKEWKHQ) lie on the Mitochondrial intermembrane side of the membrane.

The protein belongs to the cytochrome c oxidase VIIb family. In terms of assembly, component of the cytochrome c oxidase (complex IV, CIV), a multisubunit enzyme composed of 14 subunits. The complex is composed of a catalytic core of 3 subunits MT-CO1, MT-CO2 and MT-CO3, encoded in the mitochondrial DNA, and 11 supernumerary subunits COX4I, COX5A, COX5B, COX6A, COX6B, COX6C, COX7A, COX7B, COX7C, COX8 and NDUFA4, which are encoded in the nuclear genome. The complex exists as a monomer or a dimer and forms supercomplexes (SCs) in the inner mitochondrial membrane with NADH-ubiquinone oxidoreductase (complex I, CI) and ubiquinol-cytochrome c oxidoreductase (cytochrome b-c1 complex, complex III, CIII), resulting in different assemblies (supercomplex SCI(1)III(2)IV(1) and megacomplex MCI(2)III(2)IV(2)).

The protein resides in the mitochondrion inner membrane. The protein operates within energy metabolism; oxidative phosphorylation. Component of the cytochrome c oxidase, the last enzyme in the mitochondrial electron transport chain which drives oxidative phosphorylation. The respiratory chain contains 3 multisubunit complexes succinate dehydrogenase (complex II, CII), ubiquinol-cytochrome c oxidoreductase (cytochrome b-c1 complex, complex III, CIII) and cytochrome c oxidase (complex IV, CIV), that cooperate to transfer electrons derived from NADH and succinate to molecular oxygen, creating an electrochemical gradient over the inner membrane that drives transmembrane transport and the ATP synthase. Cytochrome c oxidase is the component of the respiratory chain that catalyzes the reduction of oxygen to water. Electrons originating from reduced cytochrome c in the intermembrane space (IMS) are transferred via the dinuclear copper A center (CU(A)) of subunit 2 and heme A of subunit 1 to the active site in subunit 1, a binuclear center (BNC) formed by heme A3 and copper B (CU(B)). The BNC reduces molecular oxygen to 2 water molecules using 4 electrons from cytochrome c in the IMS and 4 protons from the mitochondrial matrix. This is Cytochrome c oxidase subunit 7B2, mitochondrial (COX7B2) from Macaca fascicularis (Crab-eating macaque).